We begin with the raw amino-acid sequence, 201 residues long: Glycerol-3-phosphate acyltransferase (201 aa).

The next 6 membrane-spanning stretches (helical) occupy residues methionine 10–leucine 30, leucine 60–alanine 80, alanine 86–phenylalanine 106, leucine 116–valine 136, leucine 139–leucine 159, and alanine 166–isoleucine 186.

Belongs to the PlsY family. In terms of assembly, probably interacts with PlsX.

The protein localises to the cell inner membrane. The catalysed reaction is an acyl phosphate + sn-glycerol 3-phosphate = a 1-acyl-sn-glycero-3-phosphate + phosphate. Its pathway is lipid metabolism; phospholipid metabolism. Its function is as follows. Catalyzes the transfer of an acyl group from acyl-phosphate (acyl-PO(4)) to glycerol-3-phosphate (G3P) to form lysophosphatidic acid (LPA). This enzyme utilizes acyl-phosphate as fatty acyl donor, but not acyl-CoA or acyl-ACP. This is Glycerol-3-phosphate acyltransferase from Brucella suis (strain ATCC 23445 / NCTC 10510).